The following is a 200-amino-acid chain: MAITAQMVKELREKTGAGMMDCKKALEENGGSLEKAVDWLRQKGLSKAAKKAGRATSEGVIGNYIHSTGKIAVLVEVKCETDFVARNEKFQEFAKNVAMQIAANNPAAVDAESVDPAIIEREREVYRQKAREEGKPENIIEKIVEGGIKKFYKEICLLEQPYIRDDKMTIRDLLNDVIATLGENVTIGRFVRMQLGAEEA.

Positions 81–84 (TDFV) are involved in Mg(2+) ion dislocation from EF-Tu.

Belongs to the EF-Ts family.

It localises to the cytoplasm. Functionally, associates with the EF-Tu.GDP complex and induces the exchange of GDP to GTP. It remains bound to the aminoacyl-tRNA.EF-Tu.GTP complex up to the GTP hydrolysis stage on the ribosome. This is Elongation factor Ts from Nitratidesulfovibrio vulgaris (strain DSM 19637 / Miyazaki F) (Desulfovibrio vulgaris).